Reading from the N-terminus, the 301-residue chain is Acetylglutamate kinase (301 aa).

Substrate-binding positions include 71 to 72 (GG), Arg93, and Asn198.

Belongs to the acetylglutamate kinase family. ArgB subfamily.

The protein resides in the cytoplasm. The catalysed reaction is N-acetyl-L-glutamate + ATP = N-acetyl-L-glutamyl 5-phosphate + ADP. The protein operates within amino-acid biosynthesis; L-arginine biosynthesis; N(2)-acetyl-L-ornithine from L-glutamate: step 2/4. In terms of biological role, catalyzes the ATP-dependent phosphorylation of N-acetyl-L-glutamate. This chain is Acetylglutamate kinase, found in Rhizorhabdus wittichii (strain DSM 6014 / CCUG 31198 / JCM 15750 / NBRC 105917 / EY 4224 / RW1) (Sphingomonas wittichii).